We begin with the raw amino-acid sequence, 466 residues long: Vimentin (466 aa).

2 stretches are compositionally biased toward low complexity: residues M1–R13 and T20–V31. Residues M1 to V31 are disordered. Residue S2 is modified to N-acetylserine. Positions S2–E95 are head. At S7 the chain carries Phosphoserine; alternate. Residue S7 is glycosylated (O-linked (GlcNAc) serine; alternate). S8, S9, and S10 each carry phosphoserine. Phosphothreonine is present on T20. Residues S25 and S26 each carry the phosphoserine modification. T33 carries O-linked (GlcNAc) threonine glycosylation. Residue S34 is glycosylated (O-linked (GlcNAc) serine; alternate). Residue S34 is modified to Phosphoserine; by PKC; alternate. S39 carries the post-translational modification Phosphoserine; by CaMK2, PKA, PKC and ROCK2. Residues S42, S47, S49, and S51 each carry the phosphoserine modification. Y53 bears the Phosphotyrosine mark. S55 is subject to Phosphoserine. Phosphoserine; by CDK5 and CDK1 is present on S56. Y61 carries the phosphotyrosine modification. Position 66 is a phosphoserine (S66). At S72 the chain carries Phosphoserine; by AURKB and ROCK2. Phosphoserine is present on residues S73 and S87. Residues F96–L131 are coil 1A. Positions F96 to L131 form a coiled coil. In terms of domain architecture, IF rod spans E103 to I411. K104 is covalently cross-linked (Glycyl lysine isopeptide (Lys-Gly) (interchain with G-Cter in SUMO2)). Y117 carries the post-translational modification Phosphotyrosine. An N6-acetyllysine; alternate mark is found at K120, K129, and K139. 2 positions are modified to N6-succinyllysine; alternate: K120 and K129. Glycyl lysine isopeptide (Lys-Gly) (interchain with G-Cter in SUMO2); alternate cross-links involve residues K120, K129, and K139. The linker 1 stretch occupies residues L132–E153. S144 is subject to Phosphoserine. A coiled-coil region spans residues M154–L245. Residues M154–L245 form a coil 1B region. K168 carries the N6-acetyllysine modification. Position 188 is an N6-acetyllysine; alternate (K188). The residue at position 188 (K188) is an N6-succinyllysine; alternate. S214 carries the phosphoserine modification. K223 bears the N6-acetyllysine; alternate mark. A Glycyl lysine isopeptide (Lys-Gly) (interchain with G-Cter in SUMO2); alternate cross-link involves residue K223. Phosphoserine is present on S226. K235 carries the post-translational modification N6-acetyllysine. Residues Q246–A268 form a linker 12 region. K262 participates in a covalent cross-link: Glycyl lysine isopeptide (Lys-Gly) (interchain with G-Cter in SUMO2). A coil 2 region spans residues L269–E407. Position 294 is an N6-acetyllysine; alternate (K294). At K294 the chain carries N6-succinyllysine; alternate. Residue K294 forms a Glycyl lysine isopeptide (Lys-Gly) (interchain with G-Cter in SUMO2); alternate linkage. A Phosphoserine modification is found at S299. Positions N303–E407 form a coiled coil. Residue K313 forms a Glycyl lysine isopeptide (Lys-Gly) (interchain with G-Cter in SUMO2) linkage. At S325 the chain carries Phosphoserine. Positions L326–E329 match the [IL]-x-C-x-x-[DE] motif motif. An N6-acetyllysine; alternate modification is found at K373. K373 participates in a covalent cross-link: Glycyl lysine isopeptide (Lys-Gly) (interchain with G-Cter in SUMO2); alternate. The tract at residues E408–E466 is tail. S409, S412, S419, and S420 each carry phosphoserine. T426 carries the phosphothreonine modification. S430 is modified (phosphoserine). T436 is modified (phosphothreonine). The residue at position 438 (S438) is a Phosphoserine. K439 participates in a covalent cross-link: Glycyl lysine isopeptide (Lys-Gly) (interchain with G-Cter in SUMO2). K445 bears the N6-acetyllysine; alternate mark. Residue K445 is modified to N6-succinyllysine; alternate. Residue K445 forms a Glycyl lysine isopeptide (Lys-Gly) (interchain with G-Cter in SUMO2); alternate linkage. A Glycyl lysine isopeptide (Lys-Gly) (interchain with G-Cter in SUMO1); alternate cross-link involves residue K445. A phosphothreonine mark is found at T446 and T458. Residue S459 is modified to Phosphoserine.

The protein belongs to the intermediate filament family. In terms of assembly, homomer assembled from elementary dimers. Identified in complexes that contain VIM, EZR, AHNAK, BFSP1, BFSP2, ANK2, PLEC, PRX and spectrin. Interacts with BCAS3. Interacts with LGSN. Interacts with SYNM. Interacts (via rod region) with PLEC (via CH 1 domain). Interacts with STK33. Interacts with LARP6. Interacts with RAB8B. Interacts with TOR1A; the interaction associates TOR1A with the cytoskeleton. Interacts with TOR1AIP1. Interacts with TOR1AIP1. Interacts with DIAPH1. Interacts with EPPK1; interaction is dependent of higher-order structure of intermediate filament. Interacts with the non-receptor tyrosine kinase SRMS; the interaction leads to phosphorylation of VIM. Interacts with NOD2. Interacts (via head region) with CORO1C. Interacts with HDGF. Interacts with PRKCE (via phorbol-ester/DAG-type 2 domain). Interacts with BFSP2. Interacts with PPL. Interacts with PKP1 and PKP2. Interacts with SCRIB (via PDZ domains); the interaction protects SCRIB from proteasomal degradation and facilitates SCRIB localization to intermediate filaments, the interaction is reduced by cell contact inhibition. One of the most prominent phosphoproteins in various cells of mesenchymal origin. Phosphorylation is enhanced during cell division, at which time vimentin filaments are significantly reorganized. Phosphorylation by PKN1 inhibits the formation of filaments. Filament disassembly during mitosis is promoted by phosphorylation at Ser-55 as well as by nestin. Phosphorylated at Ser-56 by CDK5 during neutrophil secretion in the cytoplasm. Phosphorylated by STK33. Phosphorylated on tyrosine residues by SRMS. Post-translationally, S-nitrosylation is induced by interferon-gamma and oxidatively-modified low-densitity lipoprotein (LDL(ox)) possibly implicating the iNOS-S100A8/9 transnitrosylase complex.

Its subcellular location is the cytoplasm. The protein resides in the cytoskeleton. It localises to the nucleus matrix. The protein localises to the cell membrane. Its function is as follows. Vimentins are class-III intermediate filaments found in various non-epithelial cells, especially mesenchymal cells. Vimentin is attached to the nucleus, endoplasmic reticulum, and mitochondria, either laterally or terminally. Plays a role in cell directional movement, orientation, cell sheet organization and Golgi complex polarization at the cell migration front. Protects SCRIB from proteasomal degradation and facilitates its localization to intermediate filaments in a cell contact-mediated manner. In terms of biological role, involved with LARP6 in the stabilization of type I collagen mRNAs for CO1A1 and CO1A2. The sequence is that of Vimentin (VIM) from Sus scrofa (Pig).